The sequence spans 198 residues: Transcription antitermination protein NusB (198 aa).

Belongs to the NusB family.

Its function is as follows. Involved in transcription antitermination. Required for transcription of ribosomal RNA (rRNA) genes. Binds specifically to the boxA antiterminator sequence of the ribosomal RNA (rrn) operons. This chain is Transcription antitermination protein NusB, found in Methylococcus capsulatus (strain ATCC 33009 / NCIMB 11132 / Bath).